Consider the following 2021-residue polypeptide: Fanconi anemia group M protein homolog (2021 aa).

Ser-30 is subject to Phosphoserine. The region spanning 86 to 254 (ISRSALFCNT…QVITNLLIGK (169 aa)) is the Helicase ATP-binding domain. Position 99–106 (99–106 (LPTGLGKT)) interacts with ATP. A DEAH box motif is present at residues 202 to 205 (DEAH). The Helicase C-terminal domain maps to 437–612 (KLEEVILEHF…VLRLYQGSPR (176 aa)). Disordered regions lie at residues 638–657 (RSVQ…SKSN), 837–886 (PCRA…RMAD), 1002–1049 (CSPY…LPGT), 1244–1273 (GAAD…AISP), 1296–1319 (ASSS…SSKT), 1369–1441 (PRRT…RTCP), 1447–1466 (KGRN…RSQV), 1615–1700 (NKKQ…QPSI), and 1712–1732 (AQSH…ESRK). The span at 1018–1035 (ASHSAGNSQQNLESNSAK) shows a compositional bias: polar residues. The segment covering 1249–1259 (SGRHSDKEIKD) has biased composition (basic and acidic residues). Positions 1370 to 1379 (RRTEVEHLTS) are enriched in basic and acidic residues. Basic residues predominate over residues 1388 to 1397 (RKTKKPKRNV). Phosphoserine is present on Ser-1637. The segment covering 1669–1682 (SGPSGSSVPPQVLS) has biased composition (low complexity). A compositionally biased stretch (polar residues) spans 1684–1700 (PSWNQSSRQRLQVQPSI). An interaction with FAAP24 region spans residues 1689–2009 (SSRQRLQVQP…LNQERQKPDT (321 aa)).

Belongs to the DEAD box helicase family. DEAH subfamily. FANCM sub-subfamily. Component of the Fanconi anemia (FA) core complex, which consists of CENPS, CENPX, FANCA, FANCB, FANCC, FANCE, FANCF, FANCG, FANCL, FANCM, FAAP24 and FAAP100. The FA core complex associates with Bloom syndrome (BLM) complex, which consists of at least BLM, DNA topoisomerase 3-alpha/TOP3A, RMI1/BLAP75, RPA1/RPA70 and RPA2/RPA32. This supercomplex between FA and BLM complexes has been called BRAFT. Forms a discrete complex with CENPS and CENPX, called FANCM-MHF; this interaction stimulates DNA binding and replication fork remodeling by FANCM and stabilizes the binding partners. Forms a heterodimer with FAAP24; this interaction increases FANCM single-stranded DNA-binding activity. In terms of processing, phosphorylated; hyperphosphorylated in response to genotoxic stress.

It is found in the nucleus. It carries out the reaction ATP + H2O = ADP + phosphate + H(+). Functionally, DNA-dependent ATPase component of the Fanconi anemia (FA) core complex. Required for the normal activation of the FA pathway, leading to monoubiquitination of the FANCI-FANCD2 complex in response to DNA damage, cellular resistance to DNA cross-linking drugs, and prevention of chromosomal breakage. In complex with CENPS and CENPX, binds double-stranded DNA (dsDNA), fork-structured DNA (fsDNA) and Holliday junction substrates. Its ATP-dependent DNA branch migration activity can process branched DNA structures such as a movable replication fork. This activity is strongly stimulated in the presence of CENPS and CENPX. In complex with FAAP24, efficiently binds to single-strand DNA (ssDNA), splayed-arm DNA, and 3'-flap substrates. In vitro, on its own, strongly binds ssDNA oligomers and weakly fsDNA, but does not bind to dsDNA. This Mus musculus (Mouse) protein is Fanconi anemia group M protein homolog (Fancm).